The sequence spans 383 residues: S-adenosylmethionine synthase (383 aa).

His15 provides a ligand contact to ATP. Asp17 contacts Mg(2+). Glu43 is a K(+) binding site. L-methionine is bound by residues Glu56 and Gln99. Positions 99-109 (QSPDINQGVDR) are flexible loop. ATP-binding positions include 164 to 166 (DAK), 230 to 231 (RF), Asp239, 245 to 246 (RK), Ala262, and Lys266. Asp239 is an L-methionine binding site. An L-methionine-binding site is contributed by Lys270.

Belongs to the AdoMet synthase family. Homotetramer; dimer of dimers. Requires Mg(2+) as cofactor. It depends on K(+) as a cofactor.

It is found in the cytoplasm. The enzyme catalyses L-methionine + ATP + H2O = S-adenosyl-L-methionine + phosphate + diphosphate. The protein operates within amino-acid biosynthesis; S-adenosyl-L-methionine biosynthesis; S-adenosyl-L-methionine from L-methionine: step 1/1. Catalyzes the formation of S-adenosylmethionine (AdoMet) from methionine and ATP. The overall synthetic reaction is composed of two sequential steps, AdoMet formation and the subsequent tripolyphosphate hydrolysis which occurs prior to release of AdoMet from the enzyme. This is S-adenosylmethionine synthase from Pectobacterium atrosepticum (strain SCRI 1043 / ATCC BAA-672) (Erwinia carotovora subsp. atroseptica).